We begin with the raw amino-acid sequence, 130 residues long: MYRALTRDIEVTVEPFYLAEQSDPEDSRYVWGYRVVIVNQSNVAVRLINRYWHITDQNGQVDEVSGPGVIGEQPRLAPGESFEYSSGCPLDTPSGIMFGRYEMETDDAETFDVAIPAFSLDTPDLRRVLN.

The ApaG domain occupies Arg-3–Arg-127.

The polypeptide is Protein ApaG (Allorhizobium ampelinum (strain ATCC BAA-846 / DSM 112012 / S4) (Agrobacterium vitis (strain S4))).